Here is a 212-residue protein sequence, read N- to C-terminus: Ribonuclease HII (212 aa).

Residues Gly18–Arg212 enclose the RNase H type-2 domain. Residues Asp24, Glu25, and Asp118 each contribute to the a divalent metal cation site.

Belongs to the RNase HII family. Mn(2+) serves as cofactor. Mg(2+) is required as a cofactor.

It localises to the cytoplasm. The enzyme catalyses Endonucleolytic cleavage to 5'-phosphomonoester.. Its function is as follows. Endonuclease that specifically degrades the RNA of RNA-DNA hybrids. The polypeptide is Ribonuclease HII (Erythrobacter litoralis (strain HTCC2594)).